Reading from the N-terminus, the 185-residue chain is Ribosome-recycling factor (185 aa).

Belongs to the RRF family.

It localises to the cytoplasm. Responsible for the release of ribosomes from messenger RNA at the termination of protein biosynthesis. May increase the efficiency of translation by recycling ribosomes from one round of translation to another. This is Ribosome-recycling factor from Enterobacter sp. (strain 638).